A 221-amino-acid polypeptide reads, in one-letter code: NEP1-interacting protein-like 1 (221 aa).

Helical transmembrane passes span 35 to 55 (LFTF…GALI), 69 to 89 (VGAI…LLLW), and 95 to 115 (GIGC…GRLV). Residues 176–218 (CSVCLQDFQVGETVRSLPHCHHMFHLPCIDKWLRRHASCPLCR) form an RING-type; atypical zinc finger.

Belongs to the RING-type zinc finger family. NIP subfamily.

It localises to the membrane. Its function is as follows. May be involved in the early steps of the plant defense signaling pathway. The protein is NEP1-interacting protein-like 1 (ATL27) of Arabidopsis thaliana (Mouse-ear cress).